The following is a 285-amino-acid chain: Troponin T, cardiac muscle (285 aa).

The segment covering 1–58 (MSDVEEAVEEYEEQEEAAEEEHEEAVEEEAGGEAEAGEPCTAEDGEEEEGREAEDGPV) has biased composition (acidic residues). Disordered regions lie at residues 1 to 83 (MSDV…GERV) and 111 to 206 (RKKE…EKKK). N-acetylserine is present on S2. At S2 the chain carries Phosphoserine; by CK2. Positions 66-77 (RPFMPNLVPPKI) are enriched in pro residues. Composition is skewed to basic and acidic residues over residues 111–171 (RKKE…DEAR) and 190–206 (QTERKSGKRQTEREKKK). T191 bears the Phosphothreonine; by PKC/PRKCA mark. S195 is subject to Phosphoserine; by PKC/PRKCA. T200 bears the Phosphothreonine; by PKC/PRKCA and RAF1 mark. T281 bears the Phosphothreonine; by PKC/PRKCA mark.

It belongs to the troponin T family. The N-terminus is blocked. In terms of processing, phosphorylation at Thr-200 by PRKCA induces significant reduction in myofilament calcium sensitivity and actomyosin ATPase activity.

In terms of biological role, troponin T is the tropomyosin-binding subunit of troponin, the thin filament regulatory complex which confers calcium-sensitivity to striated muscle actomyosin ATPase activity. The protein is Troponin T, cardiac muscle (TNNT2) of Bos taurus (Bovine).